A 158-amino-acid chain; its full sequence is Phosphopantetheine adenylyltransferase (158 aa).

Threonine 10 is a substrate binding site. Residues 10–11 (TF) and histidine 18 each bind ATP. Substrate is bound by residues lysine 42, leucine 74, and arginine 88. ATP contacts are provided by residues 89 to 91 (GIR), glutamate 99, and 124 to 130 (WRYLSST).

Belongs to the bacterial CoaD family. As to quaternary structure, homohexamer. It depends on Mg(2+) as a cofactor.

Its subcellular location is the cytoplasm. The catalysed reaction is (R)-4'-phosphopantetheine + ATP + H(+) = 3'-dephospho-CoA + diphosphate. The protein operates within cofactor biosynthesis; coenzyme A biosynthesis; CoA from (R)-pantothenate: step 4/5. In terms of biological role, reversibly transfers an adenylyl group from ATP to 4'-phosphopantetheine, yielding dephospho-CoA (dPCoA) and pyrophosphate. This chain is Phosphopantetheine adenylyltransferase, found in Actinobacillus pleuropneumoniae serotype 7 (strain AP76).